A 145-amino-acid chain; its full sequence is MLSIIQRVNCAKVVVDNQKVADINKGILALVCVEKEDTQQNFEKMADKIIKYRIFEDDAGKMNLSLVDIDAEIILVPQFTLAADTKKGNRPSFSSGCPPEIAKEKFKEFENIFRRKYNKVQTGIFGADMKVSLTNDGPVTFSFKI.

The short motif at 137–138 is the Gly-cisPro motif, important for rejection of L-amino acids element; the sequence is GP.

This sequence belongs to the DTD family. Homodimer.

It is found in the cytoplasm. It carries out the reaction glycyl-tRNA(Ala) + H2O = tRNA(Ala) + glycine + H(+). The enzyme catalyses a D-aminoacyl-tRNA + H2O = a tRNA + a D-alpha-amino acid + H(+). In terms of biological role, an aminoacyl-tRNA editing enzyme that deacylates mischarged D-aminoacyl-tRNAs. Also deacylates mischarged glycyl-tRNA(Ala), protecting cells against glycine mischarging by AlaRS. Acts via tRNA-based rather than protein-based catalysis; rejects L-amino acids rather than detecting D-amino acids in the active site. By recycling D-aminoacyl-tRNA to D-amino acids and free tRNA molecules, this enzyme counteracts the toxicity associated with the formation of D-aminoacyl-tRNA entities in vivo and helps enforce protein L-homochirality. The sequence is that of D-aminoacyl-tRNA deacylase from Francisella tularensis subsp. holarctica (strain LVS).